Here is a 165-residue protein sequence, read N- to C-terminus: Leukotoxin-activating lysine-acyltransferase LktC (165 aa).

Active-site residues include H22 and D91.

It belongs to the RTX toxin acyltransferase family.

The protein localises to the cytoplasm. It catalyses the reaction a fatty acyl-[ACP] + L-lysyl-[protein] = N(6)-(fatty acyl)-L-lysyl-[protein] + holo-[ACP] + H(+). Functionally, involved in fatty acylation of the protoxin (LktA) at two internal lysine residues, thereby converting it to the active toxin. The protein is Leukotoxin-activating lysine-acyltransferase LktC (lktC) of Pasteurella haemolytica-like sp. (strain 5943B).